Reading from the N-terminus, the 282-residue chain is Probable xyloglucan endotransglucosylase/hydrolase protein 18 (282 aa).

The signal sequence occupies residues 1–26 (MKLSCGTSFAFLIMFLFAAQSMHVYA). The GH16 domain maps to 27 to 218 (GSFHKDVQIH…WSKAPFTAFY (192 aa)). Glu-104 acts as the Nucleophile in catalysis. Catalysis depends on Glu-108, which acts as the Proton donor. Glu-108 provides a ligand contact to xyloglucan. Asn-112 carries N-linked (GlcNAc...) asparagine glycosylation. Xyloglucan-binding positions include 121-123 (HTN), 131-133 (DKE), 197-198 (HW), and Gly-202. Cys-226 and Cys-235 form a disulfide bridge. Asn-238 is a glycosylation site (N-linked (GlcNAc...) asparagine). Residues Cys-267 and Cys-281 are joined by a disulfide bond. Arg-272 contributes to the xyloglucan binding site.

It belongs to the glycosyl hydrolase 16 family. XTH group 2 subfamily. Contains at least one intrachain disulfide bond essential for its enzymatic activity. In terms of tissue distribution, root specific.

It localises to the secreted. The protein resides in the cell wall. Its subcellular location is the extracellular space. It is found in the apoplast. It catalyses the reaction breaks a beta-(1-&gt;4) bond in the backbone of a xyloglucan and transfers the xyloglucanyl segment on to O-4 of the non-reducing terminal glucose residue of an acceptor, which can be a xyloglucan or an oligosaccharide of xyloglucan.. Its function is as follows. Catalyzes xyloglucan endohydrolysis (XEH) and/or endotransglycosylation (XET). Cleaves and religates xyloglucan polymers, an essential constituent of the primary cell wall, and thereby participates in cell wall construction of growing tissues. This chain is Probable xyloglucan endotransglucosylase/hydrolase protein 18 (XTH18), found in Arabidopsis thaliana (Mouse-ear cress).